Consider the following 194-residue polypeptide: Adenylate kinase (194 aa).

ATP is bound at residue 10-15 (GAGKGT). Residues 30–59 (STGDMLRAAVAQQSEIGKRAKAVMDAGQLV) are NMP. AMP-binding positions include threonine 31, arginine 36, 57–59 (QLV), 85–88 (GYPR), and glutamine 92. Residues 126–142 (SRVAETIAKGGQVRSDD) are LID. Arginine 127 lines the ATP pocket. Arginine 139 and arginine 150 together coordinate AMP. Residue alanine 178 participates in ATP binding.

It belongs to the adenylate kinase family. In terms of assembly, monomer.

The protein localises to the cytoplasm. It catalyses the reaction AMP + ATP = 2 ADP. It functions in the pathway purine metabolism; AMP biosynthesis via salvage pathway; AMP from ADP: step 1/1. Functionally, catalyzes the reversible transfer of the terminal phosphate group between ATP and AMP. Plays an important role in cellular energy homeostasis and in adenine nucleotide metabolism. The polypeptide is Adenylate kinase (Brucella abortus (strain S19)).